Reading from the N-terminus, the 188-residue chain is Elongation factor P (188 aa).

The protein belongs to the elongation factor P family.

The protein resides in the cytoplasm. It functions in the pathway protein biosynthesis; polypeptide chain elongation. Its function is as follows. Involved in peptide bond synthesis. Stimulates efficient translation and peptide-bond synthesis on native or reconstituted 70S ribosomes in vitro. Probably functions indirectly by altering the affinity of the ribosome for aminoacyl-tRNA, thus increasing their reactivity as acceptors for peptidyl transferase. This Anaplasma marginale (strain Florida) protein is Elongation factor P.